Here is a 217-residue protein sequence, read N- to C-terminus: Large ribosomal subunit protein eL14 (217 aa).

Lys79 carries the N6-acetyllysine modification. Position 85 is an N6-acetyllysine; alternate (Lys85). Lys85 bears the N6-succinyllysine; alternate mark. Lys124 participates in a covalent cross-link: Glycyl lysine isopeptide (Lys-Gly) (interchain with G-Cter in SUMO2). Ser139 is modified (phosphoserine). Positions 162–217 are disordered; it reads KVPAKKATGPGKKAAGQKAPAQKAAGQKAAPPAKGQKGQKTPAQKAPAPKAAGKKA. Residues 173-177 form a 1-1; approximate repeat; sequence KKAAG. The tract at residues 173 to 192 is 4 X 5 AA tandem repeats of Q-K-A-[APS]-X; sequence KKAAGQKAPAQKAAGQKAAP. 5 tandem repeats follow at residues 178 to 182, 183 to 187, 188 to 192, 195 to 197, and 198 to 200. Positions 195–200 are 2 X 3 AA tandem repeats of K-G-Q; sequence KGQKGQ. N6-succinyllysine is present on Lys206.

This sequence belongs to the eukaryotic ribosomal protein eL14 family. As to quaternary structure, component of the large ribosomal subunit.

It localises to the cytoplasm. In terms of biological role, component of the large ribosomal subunit. The ribosome is a large ribonucleoprotein complex responsible for the synthesis of proteins in the cell. This Mus musculus (Mouse) protein is Large ribosomal subunit protein eL14 (Rpl14).